The sequence spans 477 residues: MDLFLYNTLSREKERFLPVNDPVKLYTCGPTVYDYAHIGNFRTYIFEDLLKRVLLFLGYSVYHVMNITDVDDKTLAGARKKGCSLEKYCQPYIHAFFADLETLHILKADAYPHATHYIPQMIEAIQQLINQGVAYIGQDQSVYFSISQFPNYGALSHLNLEELRNSARIDADEYDKDNLCDFVLWKAYDPDRDGEIFWESPFGKGRPGWHLECSIMSISLLGQSLDIHAGGVDNIFPHHENEIAQSESLSHKPFVRYWLHSHHLLVDRKKMSKSLGNFFTLRDLLDQGFSGEEVRYLLLQGHYRTQLNFTQEGLHASRQSLKRLRDFICRLEDPSYPDDIIHPEVATACQSFLETFITSLTNDLNISSSLAALFDFIRKINSSIDQHTGIQTETDSSVFSKQDAQHILALLRKIDQVLGVLPFSQPDIPEEVLLLVEQREAARKVKNWQEADRLRDEILSRSFAIEDGKTGMKVKKL.

C28 contributes to the Zn(2+) binding site. The short motif at 30 to 40 (PTVYDYAHIGN) is the 'HIGH' region element. Zn(2+)-binding residues include C213, H238, and E242. A 'KMSKS' region motif is present at residues 270–274 (KMSKS). Residue K273 coordinates ATP.

Belongs to the class-I aminoacyl-tRNA synthetase family. Monomer. Requires Zn(2+) as cofactor.

The protein localises to the cytoplasm. It catalyses the reaction tRNA(Cys) + L-cysteine + ATP = L-cysteinyl-tRNA(Cys) + AMP + diphosphate. This is Cysteine--tRNA ligase (cysS) from Chlamydia trachomatis serovar D (strain ATCC VR-885 / DSM 19411 / UW-3/Cx).